Reading from the N-terminus, the 337-residue chain is Glyceraldehyde-3-phosphate dehydrogenase (337 aa).

Residues 17–18, Asp-39, Lys-83, and Ser-125 each bind NAD(+); that span reads RI. D-glyceraldehyde 3-phosphate contacts are provided by residues 156–158, Thr-187, Arg-202, 215–216, and Arg-238; these read SCT and TG. Cys-157 (nucleophile) is an active-site residue. Asn-319 contributes to the NAD(+) binding site.

The protein belongs to the glyceraldehyde-3-phosphate dehydrogenase family. Homotetramer.

Its subcellular location is the cytoplasm. It catalyses the reaction D-glyceraldehyde 3-phosphate + phosphate + NAD(+) = (2R)-3-phospho-glyceroyl phosphate + NADH + H(+). Its pathway is carbohydrate degradation; glycolysis; pyruvate from D-glyceraldehyde 3-phosphate: step 1/5. Functionally, catalyzes the oxidative phosphorylation of glyceraldehyde 3-phosphate (G3P) to 1,3-bisphosphoglycerate (BPG) using the cofactor NAD. The first reaction step involves the formation of a hemiacetal intermediate between G3P and a cysteine residue, and this hemiacetal intermediate is then oxidized to a thioester, with concomitant reduction of NAD to NADH. The reduced NADH is then exchanged with the second NAD, and the thioester is attacked by a nucleophilic inorganic phosphate to produce BPG. This Mycoplasma pneumoniae (strain ATCC 29342 / M129 / Subtype 1) (Mycoplasmoides pneumoniae) protein is Glyceraldehyde-3-phosphate dehydrogenase (gapA).